The primary structure comprises 164 residues: Two-component response regulator ARR16 (164 aa).

The 131-residue stretch at 30 to 160 (HVLAVDDNLI…DVEKLKCHLM (131 aa)) folds into the Response regulatory domain. Asp93 carries the 4-aspartylphosphate modification.

It belongs to the ARR family. Type-A subfamily. Post-translationally, two-component system major event consists of a His-to-Asp phosphorelay between a sensor histidine kinase (HK) and a response regulator (RR). In plants, the His-to-Asp phosphorelay involves an additional intermediate named Histidine-containing phosphotransfer protein (HPt). This multistep phosphorelay consists of a His-Asp-His-Asp sequential transfer of a phosphate group between first a His and an Asp of the HK protein, followed by the transfer to a conserved His of the HPt protein and finally the transfer to an Asp in the receiver domain of the RR protein.

The protein localises to the nucleus. Functions as a response regulator involved in His-to-Asp phosphorelay signal transduction system. Phosphorylation of the Asp residue in the receiver domain activates the ability of the protein to promote the transcription of target genes. Type-A response regulators seem to act as negative regulators of the cytokinin signaling. This is Two-component response regulator ARR16 (ARR16) from Arabidopsis thaliana (Mouse-ear cress).